A 182-amino-acid chain; its full sequence is RNA chaperone ProQ (182 aa).

Residues 125–160 form a disordered region; that stretch reads EQRKEQRKDFFKKKAREERNAKTMNKAVKKGSPKKD.

This sequence belongs to the ProQ family.

The protein resides in the cytoplasm. Its function is as follows. RNA chaperone with significant RNA binding, RNA strand exchange and RNA duplexing activities. The protein is RNA chaperone ProQ of Haemophilus ducreyi (strain 35000HP / ATCC 700724).